A 245-amino-acid polypeptide reads, in one-letter code: 1-(5-phosphoribosyl)-5-[(5-phosphoribosylamino)methylideneamino] imidazole-4-carboxamide isomerase (245 aa).

Catalysis depends on Asp-8, which acts as the Proton acceptor. The active-site Proton donor is the Asp-129.

It belongs to the HisA/HisF family.

The protein resides in the cytoplasm. The enzyme catalyses 1-(5-phospho-beta-D-ribosyl)-5-[(5-phospho-beta-D-ribosylamino)methylideneamino]imidazole-4-carboxamide = 5-[(5-phospho-1-deoxy-D-ribulos-1-ylimino)methylamino]-1-(5-phospho-beta-D-ribosyl)imidazole-4-carboxamide. The protein operates within amino-acid biosynthesis; L-histidine biosynthesis; L-histidine from 5-phospho-alpha-D-ribose 1-diphosphate: step 4/9. This is 1-(5-phosphoribosyl)-5-[(5-phosphoribosylamino)methylideneamino] imidazole-4-carboxamide isomerase from Heliobacterium modesticaldum (strain ATCC 51547 / Ice1).